Reading from the N-terminus, the 259-residue chain is UPF0246 protein Pmen_1032 (259 aa).

The protein belongs to the UPF0246 family.

In Ectopseudomonas mendocina (strain ymp) (Pseudomonas mendocina), this protein is UPF0246 protein Pmen_1032.